Reading from the N-terminus, the 111-residue chain is Phosphoribosyl-ATP pyrophosphatase (111 aa).

Belongs to the PRA-PH family.

Its subcellular location is the cytoplasm. It carries out the reaction 1-(5-phospho-beta-D-ribosyl)-ATP + H2O = 1-(5-phospho-beta-D-ribosyl)-5'-AMP + diphosphate + H(+). It participates in amino-acid biosynthesis; L-histidine biosynthesis; L-histidine from 5-phospho-alpha-D-ribose 1-diphosphate: step 2/9. This Pseudomonas putida (strain W619) protein is Phosphoribosyl-ATP pyrophosphatase.